A 169-amino-acid chain; its full sequence is Transmembrane protein 89 (169 aa).

Residues 1–22 form the signal peptide; sequence MLYTLLLVPSLFLLVMPVPSQG. Over 23–75 the chain is Extracellular; it reads WSRPLWYQVGLDLQPWGCQPNSPDIWGCQPNSLDSCKNSLGCPGYWLGLGGNR. The helical transmembrane segment at 76–96 threads the bilayer; that stretch reads IYPVAGVTITTTMLLVVSRVI. Over 97-169 the chain is Cytoplasmic; it reads VHRWRAKVAK…QIKGSPPQSG (73 aa).

It is found in the membrane. The polypeptide is Transmembrane protein 89 (Tmem89) (Mus musculus (Mouse)).